The following is a 971-amino-acid chain: MSSDLYANAVLYSEISQRNPELVSKMFNEATRKKLDAFLKDNEAPKLKDIVTDNVFKKRKRIASSSGNEPPVKKMAAKDSSDSDSSDDGAVKKNGVQKPVNVAAKKSATPVQKKAESSSSSDSDAPAKKLTPVKKPAQTPAQKKAASSSDSDSDDEPPKKAPAVTTKVAPKPMAKKQDTSDSDSDSEDSDDGKSKKANPVKVTPVANVLQKVVAKKAASSSSDSSDDEKKPAAKPTPAKPTPKPVVKKAESSSDSSDDEKKPVAKPAPAKATPKPAAKKADSSSDSSDDEAPAKKTPAKAAPKPVAKKAESSSDSSDDEKKPAAKPTPAKATPKPVAKKAESSSDSSDDEKKPVAKPAPAKATPKPVAKKAESSSDSSDDEKKPAAKPTPAKATPKPVAKKAESSSDSSDDEKKPVAKPTSAKATPKPAAKKADSSSDSSDDEAPAKKTPAKAAPKPASKKAESSSDSSDDEKPAAKSTPAKITPKPTAKKVASSSSDSSDDEKKPAAKPTPANATPKPVAKKAESSSDSSDDEKKPVAKPTSAKATPKPAAKKADLSSDFSDDEAPAKKTPAKAAPKPASKKAESSSDSSDDEKPAAKSTPAKTTPKPTAKKAASSSSDSSDDEKKPVAKPTSAKATPKPAAKKADSSSDSSDDEAPAKKTPVKPTPVKIVAKKVDSSSDSSDDEKKPTKATPVKVTPKSVTKKAAASSSDSSDDEKKPVVKQTPNVVPKKEKAASSSDDSSDDEKKPTAKPTPKATPKQSAKKADSSDDSSDDEAPAKKTPAKSTPAKTAVKKEASSSSDDSSDDEKTKKKSATTPAKSTPKTALKKAESSDSSDDDEDLPKPSKAVTPRPQRADSEESAETEESSSRTPALKAKPLATSTEKAVYENRKRKSSPFRRVQMTKDSVSEKFRNNQHDSHFDQWGQRANESLGKVVGKAFRHEKTKKKKGSYGGGPINQSINSIKFSDSDD.

Disordered stretches follow at residues 61 to 926 (RIAS…QWGQ) and 938 to 971 (KAFRHEKTKKKKGSYGGGPINQSINSIKFSDSDD). The span at 134-150 (KKPAQTPAQKKAASSSD) shows a compositional bias: low complexity. Residues 180-190 (SDSDSDSEDSD) are compositionally biased toward acidic residues. Composition is skewed to low complexity over residues 264 to 275 (AKPAPAKATPKP), 294 to 304 (KKTPAKAAPKP), 324 to 335 (AKPTPAKATPKP), 355 to 366 (AKPAPAKATPKP), 386 to 397 (AKPTPAKATPKP), 417 to 428 (AKPTSAKATPKP), 447 to 457 (KKTPAKAAPKP), 476 to 498 (AKSTPAKITPKPTAKKVASSSSD), 508 to 519 (AKPTPANATPKP), 539 to 550 (AKPTSAKATPKP), 569 to 579 (KKTPAKAAPKP), 598 to 620 (AKSTPAKTTPKPTAKKAASSSSD), 630 to 641 (AKPTSAKATPKP), 691 to 712 (KATPVKVTPKSVTKKAAASSSD), 751 to 761 (AKPTPKATPKQ), 780 to 791 (KKTPAKSTPAKT), and 815 to 825 (ATTPAKSTPKT). Basic and acidic residues predominate over residues 907–921 (SVSEKFRNNQHDSHF). Over residues 939–950 (AFRHEKTKKKKG) the composition is skewed to basic residues. A compositionally biased stretch (polar residues) spans 957 to 971 (INQSINSIKFSDSDD).

Belongs to the NOLC1 family. May form dimers. Interacts with RNA polymerase I. Expressed in the nerve ring and hypodermal tissues. Expressed in the intestine. Expressed in the germline.

The protein localises to the nucleus. The protein resides in the nucleolus. Its subcellular location is the nucleoplasm. In terms of biological role, nucleolar protein which binds to RNA polymerase I and rDNA and is required for efficient RNA polymerase I-mediated rDNA transcription. Maintains the epigenetically active status of rDNA chromatin which facilitates rDNA transcription and sustains germline development, ensuring fertility. Plays a role in the modulation of nucleolus size. May play a role in the regulation of lifespan. The sequence is that of Nucleolar protein dao-5 from Caenorhabditis elegans.